We begin with the raw amino-acid sequence, 164 residues long: Phosphohistidine phosphatase SixA homolog (164 aa).

Belongs to the SixA phosphatase family.

The sequence is that of Phosphohistidine phosphatase SixA homolog (sixA-A) from Haemophilus influenzae (strain ATCC 51907 / DSM 11121 / KW20 / Rd).